The sequence spans 756 residues: Protein psiP (756 aa).

An N-terminal signal peptide occupies residues 1 to 23 (MFIQRTFLKVLTLLSIVTVLVHG). At 24–692 (QTQPKDKITL…NCNTGAVVST (669 aa)) the chain is on the extracellular side. N-linked (GlcNAc...) asparagine glycosylation occurs at Asn-82. The 156-residue stretch at 126–281 (LNWNGEAYEY…VDYCGVCEGD (156 aa)) folds into the PA14 domain. Residues Asn-359, Asn-483, Asn-564, and Asn-663 are each glycosylated (N-linked (GlcNAc...) asparagine). Residues 693–713 (AVIAGSTVAGAVALGIFLYGG) traverse the membrane as a helical segment. Over 714 to 756 (KKGYDYWKDSRNISMGSSNSNPLYEEQQTGRGVNPMYDDPAAN) the chain is Cytoplasmic. Residues 730 to 744 (SSNSNPLYEEQQTGR) are compositionally biased toward polar residues. The interval 730 to 756 (SSNSNPLYEEQQTGRGVNPMYDDPAAN) is disordered.

The protein belongs to the prespore-cell-inducing factor family.

The protein localises to the membrane. This Dictyostelium discoideum (Social amoeba) protein is Protein psiP (psiP).